A 359-amino-acid chain; its full sequence is Apelin receptor B (359 aa).

The Extracellular portion of the chain corresponds to 1-36; the sequence is MNAMDNMTADYSPDYFDDAVNSSMCEYDEWEPSYSL. N-linked (GlcNAc...) asparagine glycans are attached at residues N6 and N21. Intrachain disulfides connect C25–C288 and C107–C186. A helical membrane pass occupies residues 37–57; it reads IPVLYMLIFILGLTGNGVVIF. The Cytoplasmic portion of the chain corresponds to 58 to 75; that stretch reads TVWRAQSKRRAADVYIGN. Residues 76–96 traverse the membrane as a helical segment; that stretch reads LALADLTFVVTLPLWAVYTAL. At 97-108 the chain is on the extracellular side; the sequence is GYHWPFGVALCK. The helical transmembrane segment at 109–129 threads the bilayer; that stretch reads ISSYVVLLNMYASVFCLTCLS. Topologically, residues 130–151 are cytoplasmic; the sequence is LDRYMAIVHSLTSTQLRTRGHM. Residues 152–172 form a helical membrane-spanning segment; that stretch reads RASLTAIWLLSGVLAAPTLLF. Residues 173-213 lie on the Extracellular side of the membrane; the sequence is RTTVYDVETNRTSCAMDFNLVVSQPGQETYWIAGLSISSTA. N-linked (GlcNAc...) asparagine glycosylation is present at N182. Residues 214-234 traverse the membrane as a helical segment; it reads LGFLIPLLAMMVCYGFIGCTV. The Cytoplasmic portion of the chain corresponds to 235–251; it reads TRHFNSLRKEDQRKRRL. The chain crosses the membrane as a helical span at residues 252-272; the sequence is LKIITTLVVVFAACWMPFHVV. Residues 273–286 lie on the Extracellular side of the membrane; it reads KTMDALSYLNLAPD. Residues 287–307 form a helical membrane-spanning segment; sequence SCTFLNLLLLAHPYATCLAYV. At 308–359 the chain is on the cytoplasmic side; sequence NSCLNPLLYAFFDLRFRSQCLCLLNLKKALHASPASSLSSQKTEAQSLATKV.

Belongs to the G-protein coupled receptor 1 family. Mesendodermal expression at the blastoderm margin appears by 4.5 hpf. At early gastrulation, expression is maintained ventrolaterally while expression in dorsal cells and random deep cells declines. During gastrulation and segmentation, expression is maintained in adaxial, intermediate, and lateral plate mesoderm. During late segmentation, expressed in several regions including the forming heart. By 24 hpf, expressed in the dorsal aorta, caudal vein, and intersomitic blood vessels.

It localises to the cell membrane. G protein-coupled receptor for peptide hormones apelin (apln) and apelin receptor early endogenous ligand (apela), that plays a role in the regulation of normal cardiovascular function and fluid homeostasis. When acting as apelin receptor, activates both G(i) protein pathway that inhibits adenylate cyclase activity, and the beta-arrestin pathway that promotes internalization of the receptor. Also functions as mechanoreceptor that is activated by pathological stimuli in a G-protein-independent fashion to induce beta-arrestin signaling, hence eliciting cardiac hypertrophy. However, the presence of apelin ligand blunts cardiac hypertrophic induction from APLNR/APJ on response to pathological stimuli. Plays a key role in early development such as gastrulation, blood vessels formation and heart morphogenesis by acting as a receptor for apela hormone, promoting endoderm and mesendoderm cell migration and regulating the migration of cells fated to become myocardial progenitors, respectively. Positively regulates angioblast migration toward the embryonic midline, i.e. the position of the future vessel formation, during vasculogenesis. May promote sinus venosus (SV)-derived endothelial cells migration into the developing heart to promote coronary blood vessel development. Required for cardiovascular development, particularly for intersomitic vein angiogenesis by acting as a receptor for apln hormone. Plays a role in various processes in adults such as regulation of blood vessel formation, blood pressure, heart contractility and heart failure. Acts redundantly with agtrl1a in heart development. In terms of biological role, g protein-coupled receptor for peptide hormones apelin (APLN) and apelin receptor early endogenous ligand (APELA/ELA), that plays a role in the regulation of normal cardiovascular function and fluid homeostasis. When acting as apelin receptor, activates both G(i) protein pathway that inhibits adenylate cyclase activity, and the beta-arrestin pathway that promotes internalization of the receptor. APLNR/APJ also functions as mechanoreceptor that is activated by pathological stimuli in a G-protein-independent fashion to induce beta-arrestin signaling, hence eliciting cardiac hypertrophy. Plays a key role in early development such as gastrulation, blood vessels formation and heart morphogenesis by acting as a APELA receptor. May promote angioblast migration toward the embryonic midline, i.e. the position of the future vessel formation, during vasculogenesis. Promotes sinus venosus (SV)-derived endothelial cells migration into the developing heart to promote coronary blood vessel development. Also plays a role in various processes in adults such as regulation of blood vessel formation, blood pressure, heart contractility and heart failure. The sequence is that of Apelin receptor B (aplnrb) from Danio rerio (Zebrafish).